Reading from the N-terminus, the 255-residue chain is Ditrans,polycis-undecaprenyl-diphosphate synthase ((2E,6E)-farnesyl-diphosphate specific) (255 aa).

The active site involves Asp21. Asp21 provides a ligand contact to Mg(2+). Residues 22-25 (GNGR), Trp26, Arg34, His38, and 66-68 (SSE) each bind substrate. The active-site Proton acceptor is the Asn69. Substrate is bound by residues Trp70, Arg72, Arg189, and 195-197 (RIS). Residue Glu208 participates in Mg(2+) binding.

It belongs to the UPP synthase family. As to quaternary structure, homodimer. Mg(2+) is required as a cofactor.

The enzyme catalyses 8 isopentenyl diphosphate + (2E,6E)-farnesyl diphosphate = di-trans,octa-cis-undecaprenyl diphosphate + 8 diphosphate. Catalyzes the sequential condensation of isopentenyl diphosphate (IPP) with (2E,6E)-farnesyl diphosphate (E,E-FPP) to yield (2Z,6Z,10Z,14Z,18Z,22Z,26Z,30Z,34E,38E)-undecaprenyl diphosphate (di-trans,octa-cis-UPP). UPP is the precursor of glycosyl carrier lipid in the biosynthesis of bacterial cell wall polysaccharide components such as peptidoglycan and lipopolysaccharide. The protein is Ditrans,polycis-undecaprenyl-diphosphate synthase ((2E,6E)-farnesyl-diphosphate specific) of Xylella fastidiosa (strain Temecula1 / ATCC 700964).